The primary structure comprises 429 residues: Dihydroorotase (429 aa).

Positions 61 and 63 each coordinate Zn(2+). Residues 63–65 and N95 each bind substrate; that span reads HYR. D153, H180, and H233 together coordinate Zn(2+). N279 serves as a coordination point for substrate. Zn(2+) is bound at residue D306. D306 is an active-site residue. Substrate contacts are provided by residues H310 and 324 to 325; that span reads FG.

Belongs to the metallo-dependent hydrolases superfamily. DHOase family. Class I DHOase subfamily. Zn(2+) serves as cofactor.

The catalysed reaction is (S)-dihydroorotate + H2O = N-carbamoyl-L-aspartate + H(+). Its pathway is pyrimidine metabolism; UMP biosynthesis via de novo pathway; (S)-dihydroorotate from bicarbonate: step 3/3. Functionally, catalyzes the reversible cyclization of carbamoyl aspartate to dihydroorotate. The protein is Dihydroorotase of Ligilactobacillus salivarius (strain UCC118) (Lactobacillus salivarius).